The following is a 251-amino-acid chain: Probable transcriptional regulatory protein CT1665 (251 aa).

This sequence belongs to the TACO1 family.

It is found in the cytoplasm. In Chlorobaculum tepidum (strain ATCC 49652 / DSM 12025 / NBRC 103806 / TLS) (Chlorobium tepidum), this protein is Probable transcriptional regulatory protein CT1665.